Reading from the N-terminus, the 274-residue chain is Ribosomal RNA small subunit methyltransferase A (274 aa).

6 residues coordinate S-adenosyl-L-methionine: Asn17, Leu19, Gly44, Glu65, Asp89, and Asn111.

The protein belongs to the class I-like SAM-binding methyltransferase superfamily. rRNA adenine N(6)-methyltransferase family. RsmA subfamily.

Its subcellular location is the cytoplasm. It carries out the reaction adenosine(1518)/adenosine(1519) in 16S rRNA + 4 S-adenosyl-L-methionine = N(6)-dimethyladenosine(1518)/N(6)-dimethyladenosine(1519) in 16S rRNA + 4 S-adenosyl-L-homocysteine + 4 H(+). In terms of biological role, specifically dimethylates two adjacent adenosines (A1518 and A1519) in the loop of a conserved hairpin near the 3'-end of 16S rRNA in the 30S particle. May play a critical role in biogenesis of 30S subunits. This Buchnera aphidicola subsp. Schizaphis graminum (strain Sg) protein is Ribosomal RNA small subunit methyltransferase A.